The primary structure comprises 638 residues: Epithelial sodium channel subunit beta (638 aa).

Over 1–50 (MPVKKYLLKCLHRLQKGPGYTYKELLVWYCNNTNTHGPKRIICEGPKKKA) the chain is Cytoplasmic. The helical transmembrane segment at 51 to 71 (MWFLLTLLFACLVCWQWGVFI) threads the bilayer. Topologically, residues 72–530 (QTYLSWEVSV…GGQFGFWMGG (459 aa)) are extracellular. Disulfide bonds link Cys-98–Cys-270, Cys-182–Cys-187, Cys-194–Cys-201, Cys-247–Cys-254, Cys-359–Cys-446, Cys-384–Cys-442, Cys-388–Cys-438, Cys-397–Cys-424, and Cys-399–Cys-413. N-linked (GlcNAc...) asparagine glycans are attached at residues Asn-135 and Asn-141. The helical transmembrane segment at 531–551 (SVLCLIEFGEIIIDFIWITVI) threads the bilayer. Topologically, residues 552 to 638 (KLVASCKGLR…MESDSEVEAI (87 aa)) are cytoplasmic. The segment at 598-620 (NAEVYPDQQTLPIPGTPPPNYDS) is disordered. The PY motif; recruits WW domain-containing proteins and is thereby required for ubiquitination and inhibition of the channel by NEDD4 and NEDD4L motif lies at 614–618 (PPPNY). Phosphoserine is present on residues Ser-631 and Ser-633.

Belongs to the amiloride-sensitive sodium channel (TC 1.A.6) family. SCNN1B subfamily. Component of the heterotrimeric epithelial sodium channel (ENaC) composed of an alpha/SCNN1A, a beta/SCNN1B and a gamma/SCNN1G subunit. Interacts with WWP1 (via WW domains). Interacts with WWP2 (via WW domains). Interacts with the full-length immature form of PCSK9 (pro-PCSK9). Interacts (N-glycosylated) with BPIFA1; the interaction is direct and inhibits the proteolytic processing of SCNN1A and SCNN1G and the activation of ENaC. Ubiquitinated. Can be ubiquitinated at multiple sites and undergo monoubiquitination and polyubiquitination. Ubiquitination by NEDD4 or NEDD4L inhibits the ENaC channel through endocytosis, intracellular retention and degradation of its individual subunits. However, some studies could not confirm the ubiquitination of this subunit of the ENaC. Post-translationally, N-glycosylated. N-glycosylation is required for interaction with BPIFA1. In terms of processing, phosphorylated on serine and threonine residues. Aldosterone and insulin increase the basal level of phosphorylation. As to expression, expressed in lung and epididymis. In the caput region of the epididymis, expressed at the luminal and basolateral surfaces of the ducts and in the smooth muscle coat. In the caudal region of the epididymis, expressed along the luminal border but not continuously, in the smooth muscle coat, in the interstitial muscle tissue and in sperm in the caudal lumen.

It localises to the apical cell membrane. Its subcellular location is the cytoplasmic vesicle membrane. It carries out the reaction Na(+)(in) = Na(+)(out). With respect to regulation, originally identified and characterized by its inhibition by the diuretic drug amiloride. Its function is as follows. This is one of the three pore-forming subunits of the heterotrimeric epithelial sodium channel (ENaC), a critical regulator of sodium balance and fluid homeostasis. ENaC operates in epithelial tissues, where it mediates the electrodiffusion of sodium ions from extracellular fluid through the apical membrane of cells, with water following osmotically. It plays a key role in maintaining sodium homeostasis through electrogenic sodium reabsorption in the kidneys. This subunit is not essential for ENaC function in airway surface liquid homeostasis and proper mucus clearance. This chain is Epithelial sodium channel subunit beta, found in Rattus norvegicus (Rat).